A 370-amino-acid polypeptide reads, in one-letter code: ADP-ribosylhydrolase ARH3 (370 aa).

Residues E35, D66, and D67 each coordinate Mg(2+). D66 is a binding site for substrate. Substrate contacts are provided by residues 135–141, H171, L225, and I261; that span reads RGSFGNG. D304, D306, and T307 together coordinate Mg(2+).

Belongs to the ADP-ribosylglycohydrolase family. In terms of assembly, monomer. Mg(2+) is required as a cofactor.

Its subcellular location is the nucleus. The protein resides in the cytoplasm. It is found in the chromosome. It localises to the mitochondrion matrix. The catalysed reaction is [(1''-&gt;2')-ADP-alpha-D-ribose](n) + H2O = [(1''-&gt;2')-ADP-alpha-D-ribose](n-1) + ADP-D-ribose. It catalyses the reaction 1''-O-acetyl-ADP-alpha-D-ribose + H2O = ADP-D-ribose + acetate + H(+). The enzyme catalyses O-(ADP-D-ribosyl)-L-seryl-[protein] + H2O = ADP-D-ribose + L-seryl-[protein]. It carries out the reaction alpha-NAD(+) + H2O = ADP-D-ribose + nicotinamide + H(+). Its activity is regulated as follows. The protein undergoes a dramatic conformational switch from closed to open states upon substrate-binding, which enables specific substrate recognition for the 1''-O-linkage. The glutamate flap (Glu-35) blocks substrate entrance to Mg(2+) in the unliganded closed state. In presence of substrate, Glu-35 is ejected from the active site: this closed-to-open transition significantly widens the substrate-binding channel and precisely positions the scissile 1''-O-linkage for cleavage while securing tightly 2'- and 3'-hydroxyls of ADP-ribose. Its function is as follows. ADP-ribosylhydrolase that preferentially hydrolyzes the scissile alpha-O-linkage attached to the anomeric C1'' position of ADP-ribose and acts on different substrates, such as proteins ADP-ribosylated on serine and threonine, free poly(ADP-ribose) and O-acetyl-ADP-D-ribose. Specifically acts as a serine mono-ADP-ribosylhydrolase by mediating the removal of mono-ADP-ribose attached to serine residues on proteins, thereby playing a key role in DNA damage response. Serine ADP-ribosylation of proteins constitutes the primary form of ADP-ribosylation of proteins in response to DNA damage. Does not hydrolyze ADP-ribosyl-arginine, -cysteine, -diphthamide, or -asparagine bonds. Also able to degrade protein free poly(ADP-ribose), which is synthesized in response to DNA damage: free poly(ADP-ribose) acts as a potent cell death signal and its degradation by ADPRHL2 protects cells from poly(ADP-ribose)-dependent cell death, a process named parthanatos. Also hydrolyzes free poly(ADP-ribose) in mitochondria. Specifically digests O-acetyl-ADP-D-ribose, a product of deacetylation reactions catalyzed by sirtuins. Specifically degrades 1''-O-acetyl-ADP-D-ribose isomer, rather than 2''-O-acetyl-ADP-D-ribose or 3''-O-acetyl-ADP-D-ribose isomers. The sequence is that of ADP-ribosylhydrolase ARH3 (adprs) from Danio rerio (Zebrafish).